Here is a 138-residue protein sequence, read N- to C-terminus: DNA-directed RNA polymerase subunit omega (138 aa).

Residues asparagine 117–serine 138 are disordered. The span at phenylalanine 124 to serine 138 shows a compositional bias: polar residues.

It belongs to the RNA polymerase subunit omega family. In terms of assembly, the RNAP catalytic core consists of 2 alpha, 1 beta, 1 beta' and 1 omega subunit. When a sigma factor is associated with the core the holoenzyme is formed, which can initiate transcription.

The enzyme catalyses RNA(n) + a ribonucleoside 5'-triphosphate = RNA(n+1) + diphosphate. Its function is as follows. Promotes RNA polymerase assembly. Latches the N- and C-terminal regions of the beta' subunit thereby facilitating its interaction with the beta and alpha subunits. This Ehrlichia canis (strain Jake) protein is DNA-directed RNA polymerase subunit omega.